Reading from the N-terminus, the 250-residue chain is ATP synthase subunit a (250 aa).

Helical transmembrane passes span 29 to 49 (ASLF…FATS), 84 to 104 (FFPL…LGMV), 114 to 134 (IIVT…YGFI), 143 to 163 (LFVP…IEII), 185 to 205 (ITLK…ALGI), and 208 to 228 (AILP…VAFL).

This sequence belongs to the ATPase A chain family. As to quaternary structure, F-type ATPases have 2 components, CF(1) - the catalytic core - and CF(0) - the membrane proton channel. CF(1) has five subunits: alpha(3), beta(3), gamma(1), delta(1), epsilon(1). CF(0) has three main subunits: a(1), b(2) and c(9-12). The alpha and beta chains form an alternating ring which encloses part of the gamma chain. CF(1) is attached to CF(0) by a central stalk formed by the gamma and epsilon chains, while a peripheral stalk is formed by the delta and b chains.

The protein resides in the cell inner membrane. Functionally, key component of the proton channel; it plays a direct role in the translocation of protons across the membrane. This is ATP synthase subunit a from Rhizobium rhizogenes (strain K84 / ATCC BAA-868) (Agrobacterium radiobacter).